The primary structure comprises 286 residues: MTAQLIDGKAIAQTIRSTLKQKVAARIEAGKRAPGLAVILVGLDAASKIYVGSKRRACEEVGFESRSFDLDINTSEADLLALIDKCNQDPSIDGILVQLPLPEHIDDSKVIERIRPDKDVDGFHPYNVGRLAQRIPVLRPCTPLGIMTLIKSTGVDTYGLDATIVGASNIVGRPMTLELLLAGCTTTTCHRFTKNLEQKVRQADLLVVAVGKPGFILGEWIKPGAIVIDVGINRLENGSLVGDVEFDAASQHAGFITPVPGGVGPMTIACLLENTLYAAETYHDVN.

Residues 166–168 (GAS) and I232 each bind NADP(+).

This sequence belongs to the tetrahydrofolate dehydrogenase/cyclohydrolase family. Homodimer.

The enzyme catalyses (6R)-5,10-methylene-5,6,7,8-tetrahydrofolate + NADP(+) = (6R)-5,10-methenyltetrahydrofolate + NADPH. It carries out the reaction (6R)-5,10-methenyltetrahydrofolate + H2O = (6R)-10-formyltetrahydrofolate + H(+). It participates in one-carbon metabolism; tetrahydrofolate interconversion. Functionally, catalyzes the oxidation of 5,10-methylenetetrahydrofolate to 5,10-methenyltetrahydrofolate and then the hydrolysis of 5,10-methenyltetrahydrofolate to 10-formyltetrahydrofolate. This is Bifunctional protein FolD from Shewanella denitrificans (strain OS217 / ATCC BAA-1090 / DSM 15013).